Reading from the N-terminus, the 530-residue chain is Equilibrative nucleoside transporter 4 (530 aa).

Positions 1 to 21 (MGSVGSQRLEEPSVAGTPDPG) are disordered. Over 1–68 (MGSVGSQRLE…DEPVPDDRYH (68 aa)) the chain is Extracellular. A helical transmembrane segment spans residues 69–89 (AIYFAMLLAGVGFLLPYNSFI). Topologically, residues 90-101 (TDVDYLHHKYPG) are cytoplasmic. A helical transmembrane segment spans residues 102–122 (TSIVFDMSLTYILVALAAVLL). Residues 123–139 (NNVLVERLTLHTRITAG) are Extracellular-facing. A helical transmembrane segment spans residues 140-160 (YLLALGPLLFISICDVWLQLF). Residues 161–166 (SRDQAY) lie on the Cytoplasmic side of the membrane. The helical transmembrane segment at 167-187 (AINLAAVGTVAFGCTVQQSSF) threads the bilayer. Topologically, residues 188–231 (YGYTGMLPKRYTQGVMTGESTAGVMISLSRILTKLLLPDERAST) are extracellular. Residues 232–252 (LIFFLVSVALELLCFLLHLLV) form a helical membrane-spanning segment. At 253–351 (RRSRFVLFYT…LLLHRYVVAR (99 aa)) the chain is on the cytoplasmic side. The chain crosses the membrane as a helical span at residues 352–372 (VIWADMLSIAVTYFITLCLFP). The Extracellular segment spans residues 373–381 (GLESEIRHC). The helical transmembrane segment at 382-402 (ILGEWLPILIMAVFNLSDFVG) threads the bilayer. At 403–416 (KILAALPVDWRGTH) the chain is on the cytoplasmic side. The chain crosses the membrane as a helical span at residues 417–437 (LLACSCLRVVFIPLFILCVYP). The Extracellular segment spans residues 438–450 (SGMPALRHPAWPC). Residues 451 to 471 (IFSLLMGISNGYFGSVPMILA) form a helical membrane-spanning segment. Residues 472-486 (AGKVSPKQRELAGNT) are Cytoplasmic-facing. A helical transmembrane segment spans residues 487–509 (MTVSYMSGLTLGSAVAYCTYSLT). The Extracellular segment spans residues 510–530 (RDAHGSCLHASTANGSILAGL). N523 is a glycosylation site (N-linked (GlcNAc...) asparagine).

The protein belongs to the SLC29A/ENT transporter (TC 2.A.57) family. In terms of processing, N-glycosylated. In terms of tissue distribution, mainly expressed in brain and skeletal muscle. In brain, expressed in cerebellum, cerebral cortex, medulla oblongata, occipital pole, frontal and temporal lobes putamen, spinal cord, substancia nigra, hippocampus, caudate nucleus, nucleus accumbens, pons and choroid plexus. Expressed in heart, in both cardiomyocytes and vascular endothelial cells. Also expressed in adrenal gland, small intestine, pancreas, kidney, liver, bone marrow, lymph node. Located in endometrial stroma, where the expression is high in the proliferative phase, decreases during the secretory phase, and is no longer detectable in the menstrual phase.

The protein resides in the cell membrane. It localises to the apical cell membrane. It catalyses the reaction serotonin(out) = serotonin(in). The catalysed reaction is dopamine(out) = dopamine(in). The enzyme catalyses (R)-noradrenaline(out) = (R)-noradrenaline(in). It carries out the reaction (R)-adrenaline(out) = (R)-adrenaline(in). It catalyses the reaction histamine(out) = histamine(in). The catalysed reaction is tyramine(in) = tyramine(out). The enzyme catalyses guanidine(out) = guanidine(in). It carries out the reaction adenosine(in) = adenosine(out). With respect to regulation, activated at acidic pH. Electrogenic voltage-dependent transporter that mediates the transport of a variety of endogenous bioactive amines, cationic xenobiotics and drugs. Utilizes the physiologic inside-negative membrane potential as a driving force to facilitate cellular uptake of organic cations. Functions as a Na(+)- and Cl(-)-independent bidirectional transporter. Substrate transport is pH-dependent and enhanced under acidic condition, which is most likely the result of allosteric changes in the transporter structure. Implicated in monoamine neurotransmitters uptake such as serotonin, dopamine, adrenaline/epinephrine, noradrenaline/norepinephrine, histamine and tyramine, thereby supporting a role in homeostatic regulation of aminergic neurotransmission in the central nervous system. Also responsible for the uptake of bioactive amines and drugs through the blood-cerebrospinal fluid (CSF) barrier, from the CSF into choroid plexus epithelial cells, thereby playing a significant role in the clearance of cationic neurotoxins, xenobiotics and metabolic waste in the brain. Involved in bidirectional transport of the purine nucleoside adenosine and plays a role in the regulation of extracellular adenosine concentrations in cardiac tissues, in particular during ischemia. May be involved in organic cation uptake from the tubular lumen into renal tubular cells, thereby contributing to organic cation reabsorption in the kidney. Also transports guanidine. The protein is Equilibrative nucleoside transporter 4 of Homo sapiens (Human).